We begin with the raw amino-acid sequence, 373 residues long: Chaperone protein DnaJ (373 aa).

Residues S4–G69 form the J domain. The CR-type zinc finger occupies G135–K212. Residues C148, C151, C164, C167, C186, C189, C200, and C203 each coordinate Zn(2+). CXXCXGXG motif repeat units follow at residues C148–G155, C164–G171, C186–G193, and C200–G207.

The protein belongs to the DnaJ family. As to quaternary structure, homodimer. The cofactor is Zn(2+).

It is found in the cytoplasm. Functionally, participates actively in the response to hyperosmotic and heat shock by preventing the aggregation of stress-denatured proteins and by disaggregating proteins, also in an autonomous, DnaK-independent fashion. Unfolded proteins bind initially to DnaJ; upon interaction with the DnaJ-bound protein, DnaK hydrolyzes its bound ATP, resulting in the formation of a stable complex. GrpE releases ADP from DnaK; ATP binding to DnaK triggers the release of the substrate protein, thus completing the reaction cycle. Several rounds of ATP-dependent interactions between DnaJ, DnaK and GrpE are required for fully efficient folding. Also involved, together with DnaK and GrpE, in the DNA replication of plasmids through activation of initiation proteins. This is Chaperone protein DnaJ from Campylobacter jejuni (strain RM1221).